Here is a 340-residue protein sequence, read N- to C-terminus: Tartrate-resistant acid phosphatase type 5 (340 aa).

Residues 1-20 (MDTWTVLLILQASLVLPGAV) form the signal peptide. 4 residues coordinate Fe cation: Asp41, Asp79, Tyr82, and Asn118. Asn124 and Asn155 each carry an N-linked (GlcNAc...) asparagine glycan. Cys169 and Cys227 are oxidised to a cystine. Fe cation contacts are provided by His213, His248, and His250.

Fe cation serves as cofactor.

The protein resides in the secreted. It catalyses the reaction a phosphate monoester + H2O = an alcohol + phosphate. Uteroferrin is a phosphoprotein phosphatase, synthesized in response to progesterone. It appears to function in transplacental transport of iron in pig. The polypeptide is Tartrate-resistant acid phosphatase type 5 (ACP5) (Sus scrofa (Pig)).